The primary structure comprises 40 residues: Allophycocyanin alpha-B chain (40 aa).

It belongs to the phycobiliprotein family. Heterodimer of an alpha and a beta chain. In terms of processing, contains one covalently linked bilin chromophore.

It localises to the cellular thylakoid membrane. Functionally, light-harvesting photosynthetic bile pigment-protein from the phycobiliprotein complex. Allophycocyanin has a maximum absorption at approximately 650 nanometers. The sequence is that of Allophycocyanin alpha-B chain from Mastigocladus laminosus (Fischerella sp.).